We begin with the raw amino-acid sequence, 725 residues long: N-alpha-acetyltransferase 35, NatC auxiliary subunit (725 aa).

S187 is subject to Phosphoserine. A disordered region spans residues 548-573 (ERIMEEQQKGRSSKKTKKKKKVRPLS). A compositionally biased stretch (basic residues) spans 558–571 (RSSKKTKKKKKVRP).

The protein belongs to the MAK10 family. In terms of assembly, component of the N-terminal acetyltransferase C (NatC) complex, which is composed of NAA35, NAA38 and NAA30.

It is found in the cytoplasm. Functionally, auxillary component of the N-terminal acetyltransferase C (NatC) complex which catalyzes acetylation of N-terminal methionine residues. N-terminal acetylation protects proteins from ubiquitination and degradation by the N-end rule pathway. Involved in regulation of apoptosis and proliferation of smooth muscle cells. The protein is N-alpha-acetyltransferase 35, NatC auxiliary subunit (NAA35) of Macaca fascicularis (Crab-eating macaque).